The sequence spans 515 residues: Cytochrome P450 705A22 (515 aa).

The helical transmembrane segment at 9–29 (FQNCFIFILIFLLTFLCFFFF) threads the bilayer. Heme is bound at residue C454.

It belongs to the cytochrome P450 family. Requires heme as cofactor.

It is found in the membrane. Functionally, plays a role in the gravitropic response of the inflorescence stems and roots. May affect the synthesis of flavonols that have a role in regulating auxin transport. In Arabidopsis thaliana (Mouse-ear cress), this protein is Cytochrome P450 705A22.